Here is a 167-residue protein sequence, read N- to C-terminus: NADH-quinone oxidoreductase subunit I 1 (167 aa).

4Fe-4S ferredoxin-type domains follow at residues 52 to 82 and 98 to 127; these read LQRD…IEAA and KVYN…HGHG. Positions 62, 65, 68, 72, 107, 110, 113, and 117 each coordinate [4Fe-4S] cluster. The tract at residues 148–167 is disordered; it reads PVPPGAKPPSMADEVPAGAH.

It belongs to the complex I 23 kDa subunit family. In terms of assembly, NDH-1 is composed of 14 different subunits. Subunits NuoA, H, J, K, L, M, N constitute the membrane sector of the complex. It depends on [4Fe-4S] cluster as a cofactor.

The protein resides in the cell inner membrane. It carries out the reaction a quinone + NADH + 5 H(+)(in) = a quinol + NAD(+) + 4 H(+)(out). In terms of biological role, NDH-1 shuttles electrons from NADH, via FMN and iron-sulfur (Fe-S) centers, to quinones in the respiratory chain. The immediate electron acceptor for the enzyme in this species is believed to be ubiquinone. Couples the redox reaction to proton translocation (for every two electrons transferred, four hydrogen ions are translocated across the cytoplasmic membrane), and thus conserves the redox energy in a proton gradient. This Solibacter usitatus (strain Ellin6076) protein is NADH-quinone oxidoreductase subunit I 1.